Consider the following 346-residue polypeptide: Cell division protein FtsZ 2 (346 aa).

GTP-binding positions include 23–27 (GGGGN), 110–112 (GTG), E141, R145, and D189. The disordered stretch occupies residues 320 to 346 (SNRSAQPTAPEAMNGQTAAAVPSRTLQ).

Belongs to the FtsZ family. Homodimer. Polymerizes to form a dynamic ring structure in a strictly GTP-dependent manner. Interacts directly with several other division proteins.

The protein localises to the cytoplasm. Essential cell division protein that forms a contractile ring structure (Z ring) at the future cell division site. The regulation of the ring assembly controls the timing and the location of cell division. One of the functions of the FtsZ ring is to recruit other cell division proteins to the septum to produce a new cell wall between the dividing cells. Binds GTP and shows GTPase activity. This Rhizobium meliloti (strain 1021) (Ensifer meliloti) protein is Cell division protein FtsZ 2.